Here is a 351-residue protein sequence, read N- to C-terminus: Gene 58 protein (351 aa).

The next 11 membrane-spanning stretches (helical) occupy residues 14 to 34, 43 to 63, 70 to 90, 97 to 117, 133 to 153, 155 to 175, 214 to 234, 240 to 260, 268 to 288, 293 to 313, and 328 to 348; these read FSTGLLASSSIVWSYIFATVF, QSVLYVWSLPIVQLAAIFCAV, LGLLLLLNCGIAFLSFISWSL, LVPGLFVINFLSLMIWLIVCF, LGFLASLTIHYCFNQFEIYLT, VMFAPFFICMLFGYIGFSHVW, LICLWFLLLAMAAGCIALVMF, GVSTYLYLFMVGNFCCGSLII, AVYSVVSLTAFFLILMGGYLF, LSMLAAVMFFCYFHANGCLLY, and FILNVCMLLNALLEITVLLAQ.

Belongs to the herpesviridae BMRF2 family.

The protein localises to the host membrane. The polypeptide is Gene 58 protein (58) (Connochaetes taurinus (Blue wildebeest)).